A 603-amino-acid chain; its full sequence is HAUS augmin-like complex subunit 3 (603 aa).

An N-acetylserine modification is found at S2. 4 coiled-coil regions span residues 93–177, 305–336, 389–426, and 458–495; these read RLDD…TQLM, VDKENLDAKISSLTSEIMKLEKEVTQIKDRSL, LSYEIELRKHRDIYRQLENLVQELSQSNMMLYKQLEML, and ENKKKELFLTHGNLEEVAEKLKQNISLVQDQLAVSAQE.

It belongs to the HAUS3 family. In terms of assembly, component of the HAUS augmin-like complex. The complex interacts with the gamma-tubulin ring complex and this interaction is required for spindle assembly. Interacts with EML3 (phosphorylated at 'Thr-881').

The protein localises to the cytoplasm. It is found in the cytoskeleton. It localises to the microtubule organizing center. The protein resides in the centrosome. Its subcellular location is the spindle. In terms of biological role, contributes to mitotic spindle assembly, maintenance of centrosome integrity and completion of cytokinesis as part of the HAUS augmin-like complex. This is HAUS augmin-like complex subunit 3 (HAUS3) from Homo sapiens (Human).